Here is a 112-residue protein sequence, read N- to C-terminus: MEKILILLLVALSVAYAAPGPRGIIINLENGELCMNSAQCKSNCCQHSSALGLARCTSMASENSECSVKTLYGIYYKCPCERGLTCEGDKTIVGSITNTNFGICHDAGRSKQ.

Positions 1–17 are cleaved as a signal peptide; the sequence is MEKILILLLVALSVAYA. A propeptide spans 18 to 22 (enterostatin, activation peptide); sequence APGPR. Cystine bridges form between cysteine 34/cysteine 45, cysteine 40/cysteine 56, cysteine 44/cysteine 78, cysteine 66/cysteine 86, and cysteine 80/cysteine 104.

The protein belongs to the colipase family. In terms of assembly, forms a 1:1 stoichiometric complex with pancreatic lipase. Expressed by the pancreas.

Its subcellular location is the secreted. Functionally, colipase is a cofactor of pancreatic lipase. It allows the lipase to anchor itself to the lipid-water interface. Without colipase the enzyme is washed off by bile salts, which have an inhibitory effect on the lipase. Enterostatin has a biological activity as a satiety signal. This chain is Colipase, found in Homo sapiens (Human).